Consider the following 2181-residue polypeptide: MQNSHFSFDTASGTFEDVTGTKVKIVEYPRSVNNGVYDSSTHLEILNLQGEIEILRSFNEYQIRAAKQQLGLDIVYELQGNVQTTSKNDFDSRGNNGNMTFNYYANTYQNSVDFSTSSSASGAGPGNSRGGLAGLLTNFSGILNPLGYLKDHNTEEMENSADRVTTQTAGNTAINTQSSLGVLCAYVEDPTKSDPPSSSTDQPTTTFTAIDRWYTGRLNSWTKAVKTFSFQAVPLPGAFLSRQGGLNGGAFTATLHRHFLMKCGWQVQVQCNLTQFHQGALLVAMVPETTLDVKPDGKAKSLQELNEEQWVEMSDDYRTGKNMPFQSLGTYYRPPNWTWGPNFINPYQVTVFPHQILNARTSTSVDINVPYIGETPTQSSETQNSWTLLVMVLVPLDYKEGATTDPEITFSVRPTSPYFNGLRNRYTAGTDEEQGPIPTAPRENSLMFLSTLPDDTVPAYGNVRTPPVNYLPGEITDLLQLARIPTLMAFERVPEPVPASDTYVPYVAVPTQFDDRPLISFPITLSDPVYQNTLVGAISSNFANYRGCIQITLTFCGPMMARGKFLLSYSPPNGTQPQTLSEAMQCTYSIWDIGLNSSWTFVVPYISPSDYRETRAITNSVYSADGWFSLHKLTKITLPPDCPQSPCILFFASAGEDYTLRLPVDCNPSYVFHSTDNAETGVIEAGNTDTDFSGELAAPGSNHTNVKFLFDRSRLLNVIKVLEKDAVFPRPFPTQEGAQQDDGYFCLLTPRPTVASRPATRFGLYANPSGSGVLANTSLDFNFYSLACFTYFRSDLEVTVVSLEPDLEFAVGWFPSGSEYQASSFVYDQLHVPFHFTGRTPRAFASKGGKVSFVLPWNSVSSVLPVRWGGASKLSSATRGLPAHADWGTIYAFVPRPNEKKSTAVKHVAVYIRYKNARAWCPSMLPFRSYKQKMLMQSGDIETNPGPASDNPILEFLEAENDLVTLASLWKMVHSVQQTWRKYVKNDDFWPNLLSELVGEGSVALAATLSNQASVKALLGLHFLSRGLNYTDFYSLLIEKCSSFFTVEPPPPPAENLMTKPSVKSKFRKLFKMQGPMDKVKDWNQIAAGLKNFQFVRDLVKEVVDWLQAWINKEKASPVLQYQLEMKKLGPVALAHDAFMAGSGPPLSDDQIEYLQNLKSLALTLGKTNLAQSLTTMINAKQSSAQRVEPVVVVLRGKPGCGKSLASTLIAQAVSKRLYGSQSVYSLPPDPDFFDGYKGQFVTLMDDLGQNPDGQDFSTFCQMVSTAQFLPNMADLAEKGRPFTSNLIIATTNLPHFSPVTIADPSAVSRRINYDLTLEVSEAYKKHTRLNFDLAFRRTDAPPIYPFAAHVPFVDVAVRFKNGHQNFNLLELVDSICTDIRAKQQGARNMQTLVLQSPNENDDTPVDEALGRVLSPAAVDEALVDLTPEADPVGRLAILAKLGLALAAVTPGLIILAVGLYRYFSGSDADQEETESEGSVKAPRSENAYDGPKKNSKPPGALSLMEMQQPNVDMGFEAAVAKKVVVPITFMVPNRPSGLTQSALLVTGRTFLINEHTWSNPSWTSFTIRGEVHTRDEPFQTVHFTHHGIPTDLMMVRLGPGNSFPNNLDKFGLDQMPARNSRVVGVSSSYGNFFFSGNFLGFVDSITSEQGTYARLFRYRVTTYKGWCGSALVCEAGGVRRIIGLHSAGAAGIGAGTYISKLGLIKALKHLGEPLATMQGLMTELEPGITVHVPRKSKLRKTTAHAVYKPEFEPAVLSKFDPRLNKDVDLDEVIWSKHTANVPYQPPLFYTYMSEYAHRVFSFLGKDNDILTVKEAILGIPGLDPMDPHTAPGLPYAINGLRRTDLVDFVNGTVDAALAVQIQKFLDGDYSDHVFQTFLKDEIRPSEKVRAGKTRIVDVPSLAHCIVGRMLLGRFAAKFQSHPGFLLGSAIGSDPDVFWTVIGAQLEGRKNTYDVDYSAFDSSHGTGSFEALISHFFTVDNGFSPALGPYLRSLAVSVHAYGERRIKITGGLPSGCAATSLLNTVLNNVIIRTALALTYKEFEYDMVDIIAYGDDLLVGTDYDLDFNEVARRAAKLGYKMTPANKGSVFPPTSSLSDAVFLKRKFVQNNDGLYKPVMDLKNLEAMLSYFKPGTLLEKLQSVSMLAQHSGKEEYDRLMHPFADYGAVPSHEYLQARWRALFD.

Glycine 80 carries the N-myristoyl glycine; by host lipid modification. 2 interaction with host receptor ANTXR1 regions span residues 316–337 and 761–772; these read DYRTGKNMPFQSLGTYYRPPNW and RFGLYANPSGSG. The region spanning 1165–1333 is the SF3 helicase domain; that stretch reads LGKTNLAQSL…YKKHTRLNFD (169 aa). Position 1197 to 1204 (1197 to 1204) interacts with ATP; it reads GKPGCGKS. Residues 1472–1500 are disordered; that stretch reads EETESEGSVKAPRSENAYDGPKKNSKPPG. Tyrosine 1489 carries the post-translational modification O-(5'-phospho-RNA)-tyrosine. The region spanning 1511-1704 is the Peptidase C3 domain; the sequence is NVDMGFEAAV…AGTYISKLGL (194 aa). Histidine 1556 acts as the For protease 3C activity and deubiquitinase activity in catalysis. Aspartate 1592 (for protease 3C activity) is an active-site residue. The For protease 3C activity and deubiquitinase activity role is filled by cysteine 1668. A RdRp catalytic domain is found at 1950 to 2068; the sequence is KNTYDVDYSA…GTDYDLDFNE (119 aa). Catalysis depends on for RdRp activity residues aspartate 1956 and aspartate 2054.

As to quaternary structure, interacts with host entry receptor ANTRX1. In terms of assembly, interacts with host IRF3; this interaction is involved in the suppression of IRF3 and IRF7 expression and phosphorylation by the virus. Interacts with host IRF7; this interaction is involved in the suppression of IRF3 and IRF7 expression and phosphorylation by the virus. Interacts with host MAVS; this interaction allows the cleavage of MAVS and subsequent suppression of host immunity. Interacts with host TRIF; this interaction allows the cleavage of TRIF and subsequent suppression of host immunity. Interacts with host TANK; this interaction allows the cleavage of TANK and subsequent suppression of host immunity. Interacts with host RIGI. Interacts with host TBK1. Interacts with host TRAF3. Post-translationally, specific enzymatic cleavages by the viral protease in vivo yield a variety of precursors and mature proteins. The polyprotein seems to be cotranslationally cleaved at the 2A/2B junction by a ribosomal skip from one codon to the next without formation of a peptide bond. This process would release the P1-2A peptide from the translational complex. During virion maturation, immature virions are rendered infectious following cleavage of VP0 into VP4 and VP2. This maturation seems to be an autocatalytic event triggered by the presence of RNA in the capsid and is followed by a conformational change of the particle. In terms of processing, myristoylation is required during RNA encapsidation and formation of the mature virus particle. Post-translationally, uridylylated by the polymerase and is covalently linked to the 5'-end of genomic RNA. This uridylylated form acts as a nucleotide-peptide primer for the polymerase.

It is found in the virion. It localises to the host cytoplasm. The protein localises to the host nucleus. Its subcellular location is the host nucleolus. The protein resides in the host cytoplasmic vesicle membrane. The catalysed reaction is RNA(n) + a ribonucleoside 5'-triphosphate = RNA(n+1) + diphosphate. It catalyses the reaction Selective cleavage of Gln-|-Gly bond in the poliovirus polyprotein. In other picornavirus reactions Glu may be substituted for Gln, and Ser or Thr for Gly.. The enzyme catalyses Thiol-dependent hydrolysis of ester, thioester, amide, peptide and isopeptide bonds formed by the C-terminal Gly of ubiquitin (a 76-residue protein attached to proteins as an intracellular targeting signal).. It carries out the reaction ATP + H2O = ADP + phosphate + H(+). In terms of biological role, forms an icosahedral capsid of pseudo T=3 symmetry with capsid proteins VP2 and VP3. Together they form an icosahedral capsid composed of 60 copies of each VP1, VP2, and VP3, with a diameter of approximately 325 Angstroms. VP4 lies on the inner surface of the protein shell formed by VP1, VP2 and VP3. All the three latter proteins contain a beta-sheet structure called beta-barrel jelly roll. VP1 is situated at the 12 fivefold axes, whereas VP2 and VP3 are located at the quasi-sixfold axes. Binds the host receptor ANTXR1 for attachment and uncoating (entry). Its function is as follows. Forms an icosahedral capsid of pseudo T=3 symmetry with capsid proteins VP2 and VP3. Together they form an icosahedral capsid composed of 60 copies of each VP1, VP2, and VP3, with a diameter of approximately 270 Angstroms. VP4 lies on the inner surface of the protein shell formed by VP1, VP2 and VP3. All the three latter proteins contain a beta-sheet structure called beta-barrel jelly roll. VP1 is situated at the 12 fivefold axes, whereas VP2 and VP3 are located at the quasi-sixfold axes. Binds the host receptor ANTXR1 for attachment and uncoating (entry). Forms an icosahedral capsid of pseudo T=3 symmetry with capsid proteins VP2 and VP3. Together they form an icosahedral capsid composed of 60 copies of each VP1, VP2, and VP3, with a diameter of approximately 270 Angstroms. VP4 lies on the inner surface of the protein shell formed by VP1, VP2 and VP3. All the three latter proteins contain a beta-sheet structure called beta-barrel jelly roll. VP1 is situated at the 12 fivefold axes, whereas VP2 and VP3 are located at the quasi-sixfold axes. Vp3 also seems to be involved in the binding to host receptor ANTXR1 for attachment and uncoating (entry). Functionally, lies on the inner surface of the capsid shell. After binding to the host receptor, the capsid undergoes conformational changes. Capsid protein VP4 is released, capsid protein VP1 N-terminus is externalized, and together, they shape a pore in the host membrane through which the viral genome is translocated into the host cell cytoplasm. After genome has been released, the channel shrinks. In terms of biological role, VP0 precursor is a component of immature procapsids. Its function is as follows. Mediates self-processing of the polyprotein by a translational effect termed 'ribosome skipping'. Mechanistically, 2A-mediated cleavage occurs between the C-terminal glycine and the proline of the downstream protein 2B. Plays an essential role in the virus replication cycle by acting as a viroporin. Creates a pore in the host endoplasmic reticulum and as a consequence releases Ca2+ in the cytoplasm of infected cell. In turn, high levels of cytoplasmic calcium may trigger membrane trafficking and transport of viral ER-associated proteins to viroplasms, sites of viral genome replication. Functionally, associates with and induces structural rearrangements of intracellular membranes. In terms of biological role, covalently linked to the 5'-end of both the positive-strand and negative-strand genomic RNAs. Acts as a genome-linked replication primer. Its function is as follows. Cysteine protease that generates mature viral proteins from the precursor polyprotein. Inactivates crucial host adapter molecules in order to suppress antiviral type-I interferon (type-I IFN) and NF-kappaB production to escape host antiviral innate immune responses. Deubiquitinase that acts on both lysine-48- and lysine-63-linked polyubiquitin chains and inhibits the ubiquitination of the ATP-dependent RNA helicase RIGI, TANK-binding kinase 1 (TBK1), and TNF receptor-associated factor 3 (TRAF3), thereby blocking the expression of IFN-beta and IFN stimulated gene 54 (ISG54). Induces host IRF3 and IRF7 degradation thereby suppressing IRF3- and IRF7-induced type-I IFN production. Also decreases host IRF3 phosphorylation leading to negligible IRF3 activation. Cleaves host MAVS, TRIF and TANK, which are then unable to regulate pattern recognition receptor (PRR)-mediated type-I IFN production. Inhibits the integrated stress response (ISR) in the infected cell by disrupting eIF4GI-G3BP1 interaction. Stress granule formation is thus inhibited. Replicates the genomic and antigenomic RNAs by recognizing replications specific signals. Performs VPg uridylylation. In Sus scrofa (Pig), this protein is Genome polyprotein.